Here is a 168-residue protein sequence, read N- to C-terminus: MEFVLFSQMSSFFLVSTLLLFLIISHSCHAQNSQQDYLDAHNTARADVGVEPLTWDDQVAAYAQNYASQLAADCNLVHSHGQYGENLAWGSGDFLTAAKAVEMWVNEKQYYAHDSNTCAQGQVCGHYTQVVWRNSVRVGCARVQCNNGGYIVSCNYDPPGNVIGKSPY.

The first 30 residues, 1-30 (MEFVLFSQMSSFFLVSTLLLFLIISHSCHA), serve as a signal peptide directing secretion. One can recognise an SCP domain in the interval 38–156 (LDAHNTARAD…NGGYIVSCNY (119 aa)).

It belongs to the CRISP family. In terms of processing, three disulfide bonds are present.

It localises to the vacuole. Probably involved in the defense reaction of plants against pathogens. The sequence is that of Pathogenesis-related protein 1C from Nicotiana tabacum (Common tobacco).